The primary structure comprises 229 residues: Large ribosomal subunit protein uL1c (229 aa).

The protein belongs to the universal ribosomal protein uL1 family. Part of the 50S ribosomal subunit.

It localises to the plastid. Its subcellular location is the chloroplast. Functionally, binds directly to 23S rRNA. Might be involved in E site tRNA release (Potential). The polypeptide is Large ribosomal subunit protein uL1c (rpl1) (Porphyra purpurea (Red seaweed)).